The following is a 187-amino-acid chain: Ribosome-recycling factor (187 aa).

This sequence belongs to the RRF family.

Its subcellular location is the cytoplasm. Its function is as follows. Responsible for the release of ribosomes from messenger RNA at the termination of protein biosynthesis. May increase the efficiency of translation by recycling ribosomes from one round of translation to another. The chain is Ribosome-recycling factor from Methylobacterium sp. (strain 4-46).